We begin with the raw amino-acid sequence, 425 residues long: Transmembrane protein 184A (425 aa).

A run of 7 helical transmembrane segments spans residues 51 to 71, 96 to 116, 133 to 153, 189 to 209, 226 to 246, 261 to 281, and 303 to 323; these read LFLTSALARGVSGVFVWTALL, LLFIVPIYAFDSWLSLLLLGG, FVIYSFLTLCFQYLGGESAIM, TLQFCIVKPVMALITIILQAF, VTLVYNASVSLALYALFLFYF, FLTIKAIIFLSFWQGMLLAIL, and LAAGYQNFLICVEMLFASLAL. Residues 375–425 form a disordered region; the sequence is QYTQQSTHEAPGPGQGGHPAPSTHPGPASGSGGGKKSRNIEKRMLIPSEDL. Low complexity predominate over residues 392 to 402; sequence HPAPSTHPGPA.

Belongs to the TMEM184 family. Expressed in testis, pancreas, parotid salivary gland and mammary gland (at protein level).

Its subcellular location is the cell membrane. The protein localises to the cytoplasm. The protein resides in the perinuclear region. It localises to the cytoplasmic vesicle membrane. It is found in the early endosome membrane. Its subcellular location is the endosome. The protein localises to the cytoplasmic vesicle. The protein resides in the secretory vesicle membrane. Acts as a heparin receptor in vascular cells. May be involved in vesicle transport in exocrine cells and Sertoli cells. The sequence is that of Transmembrane protein 184A (Tmem184a) from Mus musculus (Mouse).